The sequence spans 260 residues: 3'-5' ssDNA/RNA exonuclease TatD (260 aa).

A divalent metal cation-binding residues include glutamate 92, histidine 128, and histidine 153.

It belongs to the metallo-dependent hydrolases superfamily. TatD-type hydrolase family. TatD subfamily. In terms of assembly, monomer. Requires Mg(2+) as cofactor.

The protein localises to the cytoplasm. Its function is as follows. 3'-5' exonuclease that prefers single-stranded DNA and RNA. May play a role in the H(2)O(2)-induced DNA damage repair. The chain is 3'-5' ssDNA/RNA exonuclease TatD from Pantoea sp. (strain At-9b).